The following is a 276-amino-acid chain: Diaminopimelate epimerase (276 aa).

Substrate contacts are provided by asparagine 13, glutamine 46, and asparagine 66. The active-site Proton donor is the cysteine 75. Substrate is bound by residues 76–77 (GN), asparagine 159, asparagine 192, and 210–211 (ER). Cysteine 219 (proton acceptor) is an active-site residue. 220–221 (GT) contributes to the substrate binding site.

Belongs to the diaminopimelate epimerase family. Homodimer.

Its subcellular location is the cytoplasm. The enzyme catalyses (2S,6S)-2,6-diaminopimelate = meso-2,6-diaminopimelate. It functions in the pathway amino-acid biosynthesis; L-lysine biosynthesis via DAP pathway; DL-2,6-diaminopimelate from LL-2,6-diaminopimelate: step 1/1. Its function is as follows. Catalyzes the stereoinversion of LL-2,6-diaminopimelate (L,L-DAP) to meso-diaminopimelate (meso-DAP), a precursor of L-lysine and an essential component of the bacterial peptidoglycan. The polypeptide is Diaminopimelate epimerase (Stutzerimonas stutzeri (strain A1501) (Pseudomonas stutzeri)).